Here is a 114-residue protein sequence, read N- to C-terminus: Probable non-functional T cell receptor beta variable 6-7 (114 aa).

A signal peptide spans 1-21 (MSLGLLCCVAFSLLWAGPMNA). The 93-residue stretch at 22 to 114 (GVTQTPKFHV…TSVYFCASSY (93 aa)) folds into the Ig-like domain. Cys42 and Cys110 are disulfide-bonded. N-linked (GlcNAc...) asparagine glycosylation is present at Asn84.

Alpha-beta TR is a heterodimer composed of an alpha and beta chain; disulfide-linked. The alpha-beta TR is associated with the transmembrane signaling CD3 coreceptor proteins to form the TR-CD3 (TcR or TCR). The assembly of alpha-beta TR heterodimers with CD3 occurs in the endoplasmic reticulum where a single alpha-beta TR heterodimer associates with one CD3D-CD3E heterodimer, one CD3G-CD3E heterodimer and one CD247 homodimer forming a stable octameric structure. CD3D-CD3E and CD3G-CD3E heterodimers preferentially associate with TR alpha and TR beta chains, respectively. The association of the CD247 homodimer is the last step of TcR assembly in the endoplasmic reticulum and is required for transport to the cell surface.

It localises to the cell membrane. In terms of biological role, probable non-functional open reading frame (ORF) of V region of the variable domain of T cell receptor (TR) beta chain. Non-functional ORF generally cannot participate in the synthesis of a productive T cell receptor (TR) chain due to altered V-(D)-J or switch recombination and/or splicing site (at mRNA level) and/or conserved amino acid change (protein level). Alpha-beta T cell receptors are antigen specific receptors which are essential to the immune response and are present on the cell surface of T lymphocytes. Recognize peptide-major histocompatibility (MH) (pMH) complexes that are displayed by antigen presenting cells (APC), a prerequisite for efficient T cell adaptive immunity against pathogens. Binding of alpha-beta TR to pMH complex initiates TR-CD3 clustering on the cell surface and intracellular activation of LCK that phosphorylates the ITAM motifs of CD3G, CD3D, CD3E and CD247 enabling the recruitment of ZAP70. In turn ZAP70 phosphorylates LAT, which recruits numerous signaling molecules to form the LAT signalosome. The LAT signalosome propagates signal branching to three major signaling pathways, the calcium, the mitogen-activated protein kinase (MAPK) kinase and the nuclear factor NF-kappa-B (NF-kB) pathways, leading to the mobilization of transcription factors that are critical for gene expression and essential for T cell growth and differentiation. The T cell repertoire is generated in the thymus, by V-(D)-J rearrangement. This repertoire is then shaped by intrathymic selection events to generate a peripheral T cell pool of self-MH restricted, non-autoaggressive T cells. Post-thymic interaction of alpha-beta TR with the pMH complexes shapes TR structural and functional avidity. The protein is Probable non-functional T cell receptor beta variable 6-7 of Homo sapiens (Human).